Reading from the N-terminus, the 519-residue chain is Apolipoprotein N-acyltransferase (519 aa).

Helical transmembrane passes span 6-26 (APLGWTYVAWFGQIPLWIWIF), 47-67 (LTAIAWGGGFYGVALFWITGV), 83-103 (IAAFCWLAITAWGVVLVFVWL), 126-146 (LFILWGTASWCGLETLWSHSI), 174-194 (LLSAFIVAVNGFLALGLIDFL), and 206-226 (WHYFLIAILIWLFCQGGGWLL). One can recognise a CN hydrolase domain in the interval 244-482 (IQGNIPNQIK…YEIHAAPIYR (239 aa)). Glutamate 285 functions as the Proton acceptor in the catalytic mechanism. The active site involves lysine 343. The active-site Nucleophile is the cysteine 394. Residues 496-516 (VVFLLLVVSAIAWLYQIVFPL) traverse the membrane as a helical segment.

This sequence belongs to the CN hydrolase family. Apolipoprotein N-acyltransferase subfamily.

The protein localises to the cell inner membrane. The catalysed reaction is N-terminal S-1,2-diacyl-sn-glyceryl-L-cysteinyl-[lipoprotein] + a glycerophospholipid = N-acyl-S-1,2-diacyl-sn-glyceryl-L-cysteinyl-[lipoprotein] + a 2-acyl-sn-glycero-3-phospholipid + H(+). Its pathway is protein modification; lipoprotein biosynthesis (N-acyl transfer). Its function is as follows. Catalyzes the phospholipid dependent N-acylation of the N-terminal cysteine of apolipoprotein, the last step in lipoprotein maturation. This Synechocystis sp. (strain ATCC 27184 / PCC 6803 / Kazusa) protein is Apolipoprotein N-acyltransferase.